The primary structure comprises 323 residues: Elongation factor P--(R)-beta-lysine ligase (323 aa).

74 to 76 contacts substrate; the sequence is SPE. Residues 98–100 and Asn-107 contribute to the ATP site; that span reads RNE. Tyr-116 provides a ligand contact to substrate. 242–243 lines the ATP pocket; the sequence is EL. Glu-249 lines the substrate pocket. Gly-298 is a binding site for ATP.

Belongs to the class-II aminoacyl-tRNA synthetase family. EpmA subfamily. In terms of assembly, homodimer.

The catalysed reaction is D-beta-lysine + L-lysyl-[protein] + ATP = N(6)-((3R)-3,6-diaminohexanoyl)-L-lysyl-[protein] + AMP + diphosphate + H(+). In terms of biological role, with EpmB is involved in the beta-lysylation step of the post-translational modification of translation elongation factor P (EF-P). Catalyzes the ATP-dependent activation of (R)-beta-lysine produced by EpmB, forming a lysyl-adenylate, from which the beta-lysyl moiety is then transferred to the epsilon-amino group of a conserved specific lysine residue in EF-P. The chain is Elongation factor P--(R)-beta-lysine ligase from Photobacterium profundum (strain SS9).